The primary structure comprises 664 residues: MAAYLISFIWVSVILAQKSMGHSLFACEPITLRMCQDLPYNSTFMPNLLNHYDQQTAALAMEPFHPMVNLECSRDLRPFLCALYTPVCMEYGRMTLPCRKLCQRAYNECFKLMEMFGVPWPEEMECSRFPDCDEPYPRIVDISLSGEPSEETPLAVQRDYGFWCPRELKIDPDLRSSFLGVRDCSPPCPHMYFRREELSFARYFIGVISIVCLSATLFTFLTFLIDVTRFRYPERPIIFYAVCYMMVSLIFFIGFLLEDKVACNGANPSQYKASTVTQGSHNKACTMLFMVLYFFTMAGSVWWVILTITWFLAAVPKWGSEAIEKKALLFHASAWGIPGTLTIILLAMNKIEGDNISGVCFVGLYDVHALRYFVLAPLCLDVVVGVSLLLAGIISLNRVRIEIPLEKENQDKLVKFMIRIGVFSILYLVPLLVVIGCYFYEQAYRGVWETTWVQERCREYHIPCPYKVTQTSRPDLILFLMKYLMLLVVGIPSVFWVGSKKTCFEWASFFHGRKKKAGVNESRQVLQEPDFAQSLLRDPNTPIVRKSRGTSTQGTSTHASSTQLAMLDDQRSKAGSVQSKVSSYHGSLHRSRDGRYTPCSYRGIEERLPHGSMSHLTDHSRHSSTHRLNEQSHQGSIRDLSNPLAHISHGTSMNRVIEADATSA.

The N-terminal stretch at Met-1–Ala-16 is a signal peptide. Residues Gln-17–Phe-204 are Extracellular-facing. The 114-residue stretch at His-22–Pro-135 folds into the FZ domain. 5 cysteine pairs are disulfide-bonded: Cys-27/Cys-88, Cys-35/Cys-81, Cys-72/Cys-109, Cys-98/Cys-132, and Cys-102/Cys-126. Asn-41 carries an N-linked (GlcNAc...) asparagine glycan. A helical membrane pass occupies residues Ile-205–Ile-225. The Cytoplasmic portion of the chain corresponds to Asp-226–Pro-236. A helical transmembrane segment spans residues Ile-237–Leu-257. Topologically, residues Glu-258 to Met-287 are extracellular. Residues Leu-288 to Ile-308 traverse the membrane as a helical segment. The Cytoplasmic portion of the chain corresponds to Thr-309–Ala-327. The chain crosses the membrane as a helical span at residues Leu-328–Met-348. Over Asn-349–Phe-373 the chain is Extracellular. An N-linked (GlcNAc...) asparagine glycan is attached at Asn-355. Residues Val-374–Ile-394 traverse the membrane as a helical segment. Over Ser-395–Arg-419 the chain is Cytoplasmic. Residues Ile-420–Tyr-440 form a helical membrane-spanning segment. The Extracellular segment spans residues Glu-441–Leu-476. A helical transmembrane segment spans residues Ile-477–Val-497. The Cytoplasmic portion of the chain corresponds to Gly-498–Ala-664. A Lys-Thr-X-X-X-Trp motif, mediates interaction with the PDZ domain of Dvl family members motif is present at residues Lys-501–Trp-506. The segment at Arg-537 to Ala-664 is disordered. 2 stretches are compositionally biased toward polar residues: residues Gly-549 to Leu-564 and Lys-573 to His-585.

The protein belongs to the G-protein coupled receptor Fz/Smo family. Expression restricted to the early nervous system.

Its subcellular location is the membrane. The protein resides in the cell membrane. It is found in the cell surface. The protein localises to the apical cell membrane. In terms of biological role, receptor for Wnt proteins. Most of frizzled receptors are coupled to the beta-catenin canonical signaling pathway, which leads to the activation of disheveled proteins, inhibition of GSK-3 kinase, nuclear accumulation of beta-catenin and activation of Wnt target genes. A second signaling pathway involving PKC and calcium fluxes has been seen for some family members, but it is not yet clear if it represents a distinct pathway or if it can be integrated in the canonical pathway, as PKC seems to be required for Wnt-mediated inactivation of GSK-3 kinase. Both pathways seem to involve interactions with G-proteins. Activated by Wnt8. Involved in transduction and intercellular transmission of polarity information during tissue morphogenesis and/or in differentiated tissues. Plays a role in controlling early axon growth and guidance processes necessary for the formation of a subset of central and peripheral major fiber tracts. Involved in the migration of cranial neural crest cells. May also be implicated in the transmission of sensory information from the trunk and limbs to the brain. Controls commissural sensory axons guidance after midline crossing along the anterior-posterior axis in the developing spinal cord in a Wnt-dependent signaling pathway. Together with FZD6, is involved in the neural tube closure and plays a role in the regulation of the establishment of planar cell polarity (PCP). Promotes neurogenesis by maintaining sympathetic neuroblasts within the cell cycle in a beta-catenin-dependent manner. In Xenopus laevis (African clawed frog), this protein is Frizzled-3 (fzd3).